Here is a 429-residue protein sequence, read N- to C-terminus: UDP-N-acetylglucosamine 1-carboxyvinyltransferase (429 aa).

22 to 23 (KN) provides a ligand contact to phosphoenolpyruvate. A UDP-N-acetyl-alpha-D-glucosamine-binding site is contributed by arginine 102. Cysteine 126 acts as the Proton donor in catalysis. Cysteine 126 is modified (2-(S-cysteinyl)pyruvic acid O-phosphothioketal). UDP-N-acetyl-alpha-D-glucosamine-binding positions include 171–174 (KVSV), aspartate 316, and isoleucine 338.

The protein belongs to the EPSP synthase family. MurA subfamily.

The protein localises to the cytoplasm. It catalyses the reaction phosphoenolpyruvate + UDP-N-acetyl-alpha-D-glucosamine = UDP-N-acetyl-3-O-(1-carboxyvinyl)-alpha-D-glucosamine + phosphate. Its pathway is cell wall biogenesis; peptidoglycan biosynthesis. In terms of biological role, cell wall formation. Adds enolpyruvyl to UDP-N-acetylglucosamine. In Azorhizobium caulinodans (strain ATCC 43989 / DSM 5975 / JCM 20966 / LMG 6465 / NBRC 14845 / NCIMB 13405 / ORS 571), this protein is UDP-N-acetylglucosamine 1-carboxyvinyltransferase.